A 466-amino-acid chain; its full sequence is ATP synthase subunit beta (466 aa).

155–162 is a binding site for ATP; the sequence is GGAGVGKT.

Belongs to the ATPase alpha/beta chains family. F-type ATPases have 2 components, CF(1) - the catalytic core - and CF(0) - the membrane proton channel. CF(1) has five subunits: alpha(3), beta(3), gamma(1), delta(1), epsilon(1). CF(0) has three main subunits: a(1), b(2) and c(9-12). The alpha and beta chains form an alternating ring which encloses part of the gamma chain. CF(1) is attached to CF(0) by a central stalk formed by the gamma and epsilon chains, while a peripheral stalk is formed by the delta and b chains.

It localises to the cell inner membrane. The enzyme catalyses ATP + H2O + 4 H(+)(in) = ADP + phosphate + 5 H(+)(out). In terms of biological role, produces ATP from ADP in the presence of a proton gradient across the membrane. The catalytic sites are hosted primarily by the beta subunits. This chain is ATP synthase subunit beta, found in Bordetella pertussis (strain Tohama I / ATCC BAA-589 / NCTC 13251).